We begin with the raw amino-acid sequence, 139 residues long: D-ribose pyranase (139 aa).

His20 (proton donor) is an active-site residue. Residues Asp28, His106, and 128–130 contribute to the substrate site; that span reads YAN.

The protein belongs to the RbsD / FucU family. RbsD subfamily. In terms of assembly, homodecamer.

It is found in the cytoplasm. It carries out the reaction beta-D-ribopyranose = beta-D-ribofuranose. The protein operates within carbohydrate metabolism; D-ribose degradation; D-ribose 5-phosphate from beta-D-ribopyranose: step 1/2. Its function is as follows. Catalyzes the interconversion of beta-pyran and beta-furan forms of D-ribose. In Salmonella arizonae (strain ATCC BAA-731 / CDC346-86 / RSK2980), this protein is D-ribose pyranase.